We begin with the raw amino-acid sequence, 449 residues long: Baeyer-Villiger oxidase GME11358 (449 aa).

The protein belongs to the questin oxidase family.

It functions in the pathway secondary metabolite biosynthesis. Its function is as follows. Baeyer-Villiger oxidase; part of the gene cluster that mediates the biosynthesis of dibenzodioxocinones such as pestalotiollide B, a novel class of inhibitors against cholesterol ester transfer protein (CEPT). The biosynthesis initiates from condensation of acetate and malonate units catalyzed by the non-reducing PKS pks8/GME11356. Pks8/GME11356 lacks a thioesterase (TE) domain, which is important to the cyclizing of the third ring of atrochrysone carboxylic acid, and the esterase GME11355 might play the role of TE and catalyzes the cyclization reaction of the C ring. The lactamase-like protein GME11357 (or other beta-lactamases in Pestalotiopsis microspora) probably hydrolyzes the thioester bond between the ACP of pks8/GME11356 and the intermediate to release atrochrysone carboxylic acid, which is spontaneously dehydrates to form endocrocin anthrone. Endocrocin anthrone is further converted to emodin via the endocrocin intermediate. Emodin is then oxidized by several enzymes such as the Baeyer-Villiger oxidase GME11358, the oxidoreductase GME11367, the short chain dehydrogenase/reductase GME11373, as well as by other oxidoreductases from the cluster, to modify the A and C rings and open the B ring, and finally yield monodictyphenone. The prenyltransferase GME11375 may catalyze the addition reaction between the C5 side chains and the carbon bone of dibenzodioxocinones. The remaining biochemical reactions to the final product dibenzodioxocinones should be methylation catalyzed by methyltransferase GME11366 and reduction and lactonization reaction catalyzed by a series of oxidordeuctases. The sequence is that of Baeyer-Villiger oxidase GME11358 from Pestalotiopsis microspora.